The sequence spans 182 residues: Adenine phosphoribosyltransferase (182 aa).

This sequence belongs to the purine/pyrimidine phosphoribosyltransferase family. In terms of assembly, homodimer.

The protein resides in the cytoplasm. It catalyses the reaction AMP + diphosphate = 5-phospho-alpha-D-ribose 1-diphosphate + adenine. The protein operates within purine metabolism; AMP biosynthesis via salvage pathway; AMP from adenine: step 1/1. Catalyzes a salvage reaction resulting in the formation of AMP, that is energically less costly than de novo synthesis. The polypeptide is Adenine phosphoribosyltransferase (Pseudomonas paraeruginosa (strain DSM 24068 / PA7) (Pseudomonas aeruginosa (strain PA7))).